A 169-amino-acid chain; its full sequence is Large ribosomal subunit protein uL5 (169 aa).

It belongs to the universal ribosomal protein uL5 family. Part of the 50S ribosomal subunit; contacts the 5S rRNA and probably tRNA. Forms a bridge to the 30S subunit in the 70S ribosome.

Its function is as follows. This is one of the proteins that bind and probably mediate the attachment of the 5S RNA into the large ribosomal subunit, where it forms part of the central protuberance. In the 70S ribosome it contacts protein S13 of the 30S subunit (bridge B1b), connecting the 2 subunits; this bridge is implicated in subunit movement. May contact the P site tRNA; the 5S rRNA and some of its associated proteins might help stabilize positioning of ribosome-bound tRNAs. The chain is Large ribosomal subunit protein uL5 from Methanococcoides burtonii (strain DSM 6242 / NBRC 107633 / OCM 468 / ACE-M).